The chain runs to 111 residues: Dynein light chain Tctex-type (111 aa).

The protein belongs to the dynein light chain Tctex-type family.

The protein resides in the cytoplasm. It is found in the cytoskeleton. Its function is as follows. Acts as a non-catalytic accessory component of a dynein complex. The protein is Dynein light chain Tctex-type (dlcA) of Dictyostelium discoideum (Social amoeba).